The primary structure comprises 485 residues: Cobyric acid synthase (485 aa).

The region spanning Val-248–Ala-435 is the GATase cobBQ-type domain. Cys-329 (nucleophile) is an active-site residue. His-427 is an active-site residue.

It belongs to the CobB/CobQ family. CobQ subfamily.

Its pathway is cofactor biosynthesis; adenosylcobalamin biosynthesis. Catalyzes amidations at positions B, D, E, and G on adenosylcobyrinic A,C-diamide. NH(2) groups are provided by glutamine, and one molecule of ATP is hydrogenolyzed for each amidation. This chain is Cobyric acid synthase, found in Stutzerimonas stutzeri (strain A1501) (Pseudomonas stutzeri).